Reading from the N-terminus, the 291-residue chain is Protease HtpX (291 aa).

2 helical membrane passes run 4–24 and 37–57; these read VLLF…VLSV and GGLL…SLLM. Histidine 143 serves as a coordination point for Zn(2+). The active site involves glutamate 144. Position 147 (histidine 147) interacts with Zn(2+). The next 2 membrane-spanning stretches (helical) occupy residues 158-178 and 198-218; these read LIQG…AGIV and FAIS…IVMW. Glutamate 224 contributes to the Zn(2+) binding site.

The protein belongs to the peptidase M48B family. Zn(2+) serves as cofactor.

The protein resides in the cell inner membrane. The polypeptide is Protease HtpX (Tolumonas auensis (strain DSM 9187 / NBRC 110442 / TA 4)).